The following is a 409-amino-acid chain: Peptidase T (409 aa).

A Zn(2+)-binding site is contributed by H78. Residue D80 is part of the active site. Position 140 (D140) interacts with Zn(2+). Catalysis depends on E174, which acts as the Proton acceptor. Residues E175, D197, and H379 each contribute to the Zn(2+) site.

The protein belongs to the peptidase M20B family. Requires Zn(2+) as cofactor.

The protein localises to the cytoplasm. The enzyme catalyses Release of the N-terminal residue from a tripeptide.. In terms of biological role, cleaves the N-terminal amino acid of tripeptides. The chain is Peptidase T from Aliivibrio fischeri (strain ATCC 700601 / ES114) (Vibrio fischeri).